A 35-amino-acid chain; its full sequence is Photosystem II reaction center protein M (35 aa).

Residues 5–25 (IFGLTATALFIIIPTSFLLIL) form a helical membrane-spanning segment.

This sequence belongs to the PsbM family. PSII is composed of 1 copy each of membrane proteins PsbA, PsbB, PsbC, PsbD, PsbE, PsbF, PsbH, PsbI, PsbJ, PsbK, PsbL, PsbM, PsbT, PsbX, PsbY, PsbZ, Psb30/Ycf12, at least 3 peripheral proteins of the oxygen-evolving complex and a large number of cofactors. It forms dimeric complexes.

It localises to the plastid. The protein localises to the chloroplast thylakoid membrane. In terms of biological role, one of the components of the core complex of photosystem II (PSII). PSII is a light-driven water:plastoquinone oxidoreductase that uses light energy to abstract electrons from H(2)O, generating O(2) and a proton gradient subsequently used for ATP formation. It consists of a core antenna complex that captures photons, and an electron transfer chain that converts photonic excitation into a charge separation. This subunit is found at the monomer-monomer interface. In Tetradesmus obliquus (Green alga), this protein is Photosystem II reaction center protein M.